The chain runs to 444 residues: S-locus-specific glycoprotein (444 aa).

An N-terminal signal peptide occupies residues 1-28 (MRGVIPNYHHSYTLFFFVILVLFPHVFS). Residues 31–159 (TLSPNEALTI…KTNDLDRFMW (129 aa)) enclose the Bulb-type lectin domain. N-linked (GlcNAc...) asparagine glycans are attached at residues N43, N125, N243, and N396. One can recognise a PAN domain in the interval 356 to 437 (CGEGDGFLRM…GGQDLYVKVA (82 aa)). Cystine bridges form between C387/C412 and C395/C397.

As to expression, stigma.

Involved in sporophytic self-incompatibility system (the inability of flowering plants to achieve self-fertilization). The protein is S-locus-specific glycoprotein (SLSG) of Brassica oleracea var. alboglabra (Chinese kale).